We begin with the raw amino-acid sequence, 49 residues long: Single-stranded DNA-binding protein (49 aa).

Homodimer in the absence of DNA, monomer when binding DNA.

Functionally, binds preferentially to single-stranded DNA and therefore, destabilizes double-stranded DNA. It is involved in DNA replication, repair and recombination. Binds ss-DNA as the replication fork advances and stimulates the replisome processivity and accuracy. This chain is Single-stranded DNA-binding protein (32), found in Enterobacteria phage RB9 (Bacteriophage RB9).